We begin with the raw amino-acid sequence, 288 residues long: Phenazine biosynthesis-like domain-containing protein (288 aa).

Residue glutamate 46 is part of the active site.

This sequence belongs to the PhzF family. Interacts with UNRIP/MAWD.

The protein is Phenazine biosynthesis-like domain-containing protein (PBLD) of Pongo abelii (Sumatran orangutan).